A 365-amino-acid polypeptide reads, in one-letter code: Cytochrome P450 71A3 (365 aa).

This sequence belongs to the cytochrome P450 family. It depends on heme as a cofactor.

In terms of biological role, may have a role in maturation, such as during flavor formation or other metabolite production specific to aging tissues. The polypeptide is Cytochrome P450 71A3 (CYP71A3) (Solanum melongena (Eggplant)).